The sequence spans 220 residues: Protein LURP-one-related 12 (220 aa).

Belongs to the LOR family.

Functionally, might be related to the phospholipid scramblase and tubby-like superfamily of membrane tethered transcription factors. The protein is Protein LURP-one-related 12 of Arabidopsis thaliana (Mouse-ear cress).